The primary structure comprises 507 residues: MAEEQARHVKNGLECIRALKAEPIGSLAIGEAMAAWSEISDNPGQERATYKEEKAGGSGLSKPCLSAIGSTEGGAPRIRGQGSGESDDDTETLGIPSRNLQASSTGLQCHYVYDHSGEAVKGIQDADSIMVQSGLDGDSTLSEGDNESENSDVDIGEPDTEGYAITDRGSAPISMGFRASDVETAEGGEIHELLRLQSRGNNFPKLGKTLNVPPPPDPGRASTSETPIKKGTDARLASFGTEIASLLTGGATQCARKSPSEPSGPGAPAGNVPECVSNAALIQEWTPESGTTISPRSQNNKEGGDHYDDELFSDIQDIKTALAKIHEDNQKIISKLESLLLLKGEVESIKKQINKQNISISTLEGHLSSIMIAIPGLGKDPNDPTADVEINPDLKPIIGRDSGRALAEVLKKPVASRQLQGMTNGRTSSRGQLLKEFQLKPIGKKMSSAVGFVPDTGPVSRSVIRSIIKSSRIEEDRKRYLMTLLDDIKGANDLSKFHQMLMKIIMK.

The segment at Met-1–Ala-48 is interaction with N0. Disordered stretches follow at residues Asn-42 to Glu-91, Ser-133 to Tyr-163, Asn-201 to Pro-227, Thr-252 to Pro-273, and Trp-285 to Tyr-307. A phosphoserine mark is found at Ser-86 and Ser-151. A compositionally biased stretch (acidic residues) spans Gly-144–Thr-160. Residues Ser-260 to Gly-270 show a composition bias toward low complexity. The span at Thr-286 to Lys-301 shows a compositional bias: polar residues. The tract at residues Gly-304 to Gly-376 is multimerization. Interaction with the L polymerase stretches follow at residues Ser-361–Leu-377 and Pro-396–Leu-410. The x domain (XD) stretch occupies residues Gly-457 to Lys-507. The interval Val-459–Lys-507 is interaction with the nucleocapsid (N-RNA).

It belongs to the morbillivirus P protein family. As to quaternary structure, homotetramer. Interacts (via multimerization domain and XD domain) with polymerase L; this interaction forms the polymerase L-P complex. Interacts (via N-terminus) with N0 (via Ncore); this interaction allows P to chaperon N0 to avoid N polymerization and non-specific RNA binding before encapsidation. Interacts (via C-terminus) with N-RNA template (via Ntail); this interaction maintains the P/L complex anchored to the nucleocapsid template during the sequential transcription. Interacts (via C-terminus) with protein C this interaction allows C to associate with the ribonucleocapsid. In terms of processing, phosphorylation on serines by host CK2 is necessary for the formation of viral factories.

In terms of biological role, essential cofactor of the RNA polymerase L that plays a central role in the transcription and replication by forming the polymerase complex with RNA polymerase L and recruiting L to the genomic N-RNA template for RNA synthesis. Also plays a central role in the encapsidation of nascent RNA chains by forming the encapsidation complex with the nucleocapsid protein N (N-P complex). Acts as a chaperone for newly synthesized free N protein, so-called N0, allowing encapsidation of nascent RNA chains during replication. The nucleoprotein protein N prevents excessive phosphorylation of P, which leads to down-regulation of viral transcription/ replication. Participates, together with N, in the formation of viral factories (viroplasms), which are large inclusions in the host cytoplasm where replication takes place. The sequence is that of Phosphoprotein (P/V) from Homo sapiens (Human).